The sequence spans 591 residues: Formate--tetrahydrofolate ligase (591 aa).

Thr-74–Ser-81 provides a ligand contact to ATP.

It belongs to the formate--tetrahydrofolate ligase family.

The catalysed reaction is (6S)-5,6,7,8-tetrahydrofolate + formate + ATP = (6R)-10-formyltetrahydrofolate + ADP + phosphate. It participates in one-carbon metabolism; tetrahydrofolate interconversion. This chain is Formate--tetrahydrofolate ligase, found in Desulfovibrio desulfuricans (strain ATCC 27774 / DSM 6949 / MB).